The sequence spans 240 residues: Eukaryotic translation initiation factor 4E-3 (240 aa).

The segment at 1–51 (MVVTDSPVSGIMADQNIDPNTTTSPSPKEKHVSAIKAISGDEKAPSKEKKN) is disordered. Polar residues predominate over residues 17-26 (IDPNTTTSPS). Residues 39–51 (SGDEKAPSKEKKN) are compositionally biased toward basic and acidic residues. EIF4G-binding regions lie at residues 65-68 (HCFQ) and 75-111 (FDNP…NNIH). MRNA-binding positions include 83 to 88 (NQVIWG), lysine 115, and 133 to 134 (WE). Cysteines 138 and 176 form a disulfide. Residues 159–168 (NTLLALVGEQ) are EIF4G-binding. Residues 183–188 (RARGDR) and 228–232 (KTLDR) each bind mRNA.

Belongs to the eukaryotic initiation factor 4E family. In terms of assembly, EIF4F is a multi-subunit complex, the composition of which varies with external and internal environmental conditions. It is composed of at least EIF4A, EIF4E and EIF4G. EIF4E is also known to interact with other partners. In higher plants two isoforms of EIF4F have been identified, named isoform EIF4F and isoform EIF(iso)4F. Isoform EIF4F has subunits p220 and p26, whereas isoform EIF(iso)4F has subunits p82 and p28. Post-translationally, according to the redox status, the Cys-138-Cys-176 disulfide bridge may have a role in regulating protein function by affecting its ability to bind capped mRNA.

The protein localises to the nucleus. Its subcellular location is the cytoplasm. Component of the protein complex eIF4F, which is involved in the recognition of the mRNA cap, ATP-dependent unwinding of 5'-terminal secondary structure and recruitment of mRNA to the ribosome. Recognizes and binds the 7-methylguanosine-containing mRNA cap during an early step in the initiation of protein synthesis and facilitates ribosome binding by inducing the unwinding of the mRNAs secondary structures. The chain is Eukaryotic translation initiation factor 4E-3 from Arabidopsis thaliana (Mouse-ear cress).